The following is a 387-amino-acid chain: Protein PHYTOCHROME KINASE SUBSTRATE 3 (387 aa).

Disordered stretches follow at residues 1 to 21 (MDAEKKSAHFRQISSYKPQLL), 74 to 128 (HEKE…CNSQ), and 242 to 271 (LSTKNNNHNNNGNNSSMSSNTQEEETASVA). Polar residues predominate over residues 12 to 21 (QISSYKPQLL). A compositionally biased stretch (basic and acidic residues) spans 74–83 (HEKENTHDHP). Positions 114-128 (HGTPSVRSESSCNSQ) are enriched in polar residues. Low complexity predominate over residues 242 to 261 (LSTKNNNHNNNGNNSSMSSN).

Belongs to the PKS family.

Functionally, probably involved in the phytochrome signaling pathway. This is Protein PHYTOCHROME KINASE SUBSTRATE 3 (PKS3) from Arabidopsis thaliana (Mouse-ear cress).